Here is a 1293-residue protein sequence, read N- to C-terminus: MEMFASKSLQVEGLLFGVCSPEEILATSVVEVTKSCLKAETGSVYDPRMGSAGVDDDDALCPTCENTGRECPGHFGHIELAKPVVLFYKETVAWLKRCCHVCGTVGNEPRPFFFAPYSACNACGAQRPLVRLVDAHDPCAIRVTVRRKDGEPETMPPELILATLDRVRDSDVDRVLGRGKGSHVRFHPRRLVMTRMPVLPPCCRPNARQWPDGAMQDDNLSVFVSQIVKVNQRIKALEPDNPAVEGLVAQLRLKTLCFVDNTKGKVMHATNRKPMAGIKERIGKKGGLLRQNIMGKRRNQTGRSVVGPDGTLEVDEVGVPEAIADNLTVPVMVTPFNVSSLEAMMRDGRVSSVEMRDGTVHRPSEWRPSHGDHMETADGSPLGRVTRPSYDARDPSVVLRSWKTGETVTRPPPFSWPKLEPGMTVTRCLVDGDPVALNRQPTLHRNSMLGMRVKRLPGKTIRLNLSVTSGFNMDFDGDEGNLYLPQGPQARSETMLLMNPKSVIMSARGPHAEVSLVQDGVLGCHLMSLNSEIPCPPEELATCLMEVHGCEGWDVRDVEKGATPRDLLSSVLPSTLTVDCGGGCRIESGKIVSGHLTKSAVKKIVRAVCLENGGDAAGKLVDKLQFLTNAWLSHRPFSVGYSDCLTERPEETVRMVADAVCSKILEAEAADDEDGVSVALCGARDRGQAVTCAALTPDNRMAVMSRAQSKGDMFNLTQIAGLLGQQYVGGSRPGKEIDGGRRSLPHYPRVWDLEQTTLKYESRGFVRSSFLKGLNPREVFFHAKSGREGMISTSQMTGVTGYAERKMVKLNEDLVSAYDGTVRDAMGNVVQFVYGGHGMDPQRCWSDGCPVNFKTLAEECSSQECSSQISGLRSPAVTSVEEASLLVPVGLCPGAPDPVRESLFLKHASVILKGAEEHPCEDHSAWRERVARSYAAAVLCPGEAVGVLCAQSIGAKQTQQTLDTFHKAGVWLDDAGSVPFGELLGLSQKPMRRQCVVPLKVDPSTPGDEVRDLVGCSFVRRDLLDLLAVRPSTATVGKTASLELDPVKCFELRISPADVAYAVAEKFPPPHFDVSVSSFGVTLSWSVNYPVDNLFTGLFSVQVGGTPGVESYRLLRGRDGGWVAVTKGTNLGAFLCHPLADWERVRTDDVWDVYETLGLAAAKKRLYELMFSCVGDNLYPAHIKLLTDRMMRRGRPTPIDRYTMRTCEVGPLSRAAFEESLDILTGAGCTAETEHCAGAGARVAAGLPVRAGTGYMGLLCGKGFFDEPVVKVPDADGREYVDYSYSDDESFEW.

Residues Cys-61, Cys-64, Cys-71, His-74, Cys-99, Cys-102, and Cys-123 each contribute to the Zn(2+) site. Residues 270–339 (TNRKPMAGIK…PVMVTPFNVS (70 aa)) mediate DNA binding. Over residues 354 to 376 (EMRDGTVHRPSEWRPSHGDHMET) the composition is skewed to basic and acidic residues. The interval 354-390 (EMRDGTVHRPSEWRPSHGDHMETADGSPLGRVTRPSY) is disordered. Mg(2+) is bound by residues Asp-474, Asp-476, and Asp-478. Residues 724 to 734 (GQQYVGGSRPG) form an alpha-amanitin binding region. Residues 776–788 (PREVFFHAKSGRE) form a bridging helix region.

It belongs to the RNA polymerase beta' chain family.

It carries out the reaction RNA(n) + a ribonucleoside 5'-triphosphate = RNA(n+1) + diphosphate. In terms of biological role, component of the DNA-dependent RNA polymerase that catalyzes the transcription of DNA into RNA using the four ribonucleoside triphosphates as substrates. Largest and catalytic component of RNA polymerase II which synthesizes mRNA precursors and many functional non-coding RNAs. Forms the polymerase active center together with the second largest subunit. The sequence is that of Putative DNA-directed RNA polymerase 008R from Frog virus 3 (isolate Goorha) (FV-3).